Here is a 1747-residue protein sequence, read N- to C-terminus: E3 ubiquitin-protein ligase listerin (1747 aa).

The disordered stretch occupies residues 1–24 (MGGKTKQAPRTKNNAKPSSSSRTA). Over residues 8–24 (APRTKNNAKPSSSSRTA) the composition is skewed to polar residues. 5 HEAT repeats span residues 65–102 (AAIS…QSDV), 106–144 (KNIL…KCKK), 346–383 (NIRK…KVTQ), 424–461 (NAYF…NVLE), and 508–547 (KFWI…ANPS). The residue at position 566 (S566) is a Phosphoserine. 12 HEAT repeats span residues 612–653 (SRYI…LLGQ), 664–711 (EIVF…CAEA), 789–825 (SFIA…EHRP), 952–989 (LSRN…DPED), 1005–1042 (KWNE…ELVL), 1053–1090 (GNSS…FCPQ), 1129–1166 (KLSQ…NFEG), 1216–1258 (VEFI…SIAQ), 1269–1307 (VAVY…LFAK), 1330–1363 (FQAC…NSNI), 1364–1400 (TLDH…HFVA), and 1500–1539 (ENFL…QKDR). The RING-type zinc finger occupies 1697–1744 (CYVCYTVIHQETCQLPKLTCKTCKKKFHGPCLYKWFTTSSKSTCPICR).

Belongs to the LTN1 family. Component of the ribosome quality control complex (RQC), composed of at least the E3 ubiquitin ligase l(3)76BDr/LTN1 and Clbn/NEMF. The complex probably also contains TCF25 as well as TER94/VCP and its ubiquitin-binding cofactors. RQC forms a stable complex with 60S ribosomal subunits.

Its subcellular location is the cytoplasm. It is found in the cytosol. It catalyses the reaction S-ubiquitinyl-[E2 ubiquitin-conjugating enzyme]-L-cysteine + [acceptor protein]-L-lysine = [E2 ubiquitin-conjugating enzyme]-L-cysteine + N(6)-ubiquitinyl-[acceptor protein]-L-lysine.. The protein operates within protein modification; protein ubiquitination. Its function is as follows. E3 ubiquitin-protein ligase component of the ribosome quality control complex (RQC), a ribosome-associated complex that mediates ubiquitination and extraction of incompletely synthesized nascent chains for proteasomal degradation. Ubiquitination leads to TER94/VCP recruitment for extraction and degradation of the incomplete translation product. In Drosophila melanogaster (Fruit fly), this protein is E3 ubiquitin-protein ligase listerin.